The sequence spans 220 residues: Charged multivesicular body protein 5 (220 aa).

Residues 1-10 (MNRIFGRGKP) show a composition bias toward basic residues. Residues 1–27 (MNRIFGRGKPKGPPPNLTDCISGVDSR) are disordered. Coiled-coil stretches lie at residues 25–55 (DSRAESVDKKIARLDAELMKYKDQMKKMRDG) and 121–153 (KNVKIDQIEDLQDQLEDMMEDANEVQEALSRSY). The interval 178 to 206 (DDNSYLDEASSAPAIPEGAPGDRTTNRDG) is disordered.

It belongs to the SNF7 family. In terms of assembly, probable peripherally associated component of the endosomal sorting required for transport complex III (ESCRT-III).

The protein resides in the cytoplasm. It is found in the cytosol. Its subcellular location is the endosome membrane. In terms of biological role, probable peripherally associated component of the endosomal sorting required for transport complex III (ESCRT-III) which is involved in multivesicular bodies (MVBs) formation and sorting of endosomal cargo proteins into MVBs. MVBs contain intraluminal vesicles (ILVs) that are generated by invagination and scission from the limiting membrane of the endosome and mostly are delivered to lysosomes enabling degradation of membrane proteins, such as stimulated growth factor receptors, lysosomal enzymes and lipids. This chain is Charged multivesicular body protein 5 (chmp5), found in Danio rerio (Zebrafish).